The chain runs to 264 residues: Shikimate dehydrogenase (NADP(+)) (264 aa).

Shikimate-binding positions include 14-16 and T61; that span reads SVS. The active-site Proton acceptor is the K65. The shikimate site is built by N85 and D99. NADP(+)-binding positions include 122–126, 145–150, and A208; these read GAGGA and NRTVSR. Residue Y210 coordinates shikimate. G231 is a binding site for NADP(+).

It belongs to the shikimate dehydrogenase family. As to quaternary structure, homodimer.

It carries out the reaction shikimate + NADP(+) = 3-dehydroshikimate + NADPH + H(+). It participates in metabolic intermediate biosynthesis; chorismate biosynthesis; chorismate from D-erythrose 4-phosphate and phosphoenolpyruvate: step 4/7. Its function is as follows. Involved in the biosynthesis of the chorismate, which leads to the biosynthesis of aromatic amino acids. Catalyzes the reversible NADPH linked reduction of 3-dehydroshikimate (DHSA) to yield shikimate (SA). The protein is Shikimate dehydrogenase (NADP(+)) of Natronomonas pharaonis (strain ATCC 35678 / DSM 2160 / CIP 103997 / JCM 8858 / NBRC 14720 / NCIMB 2260 / Gabara) (Halobacterium pharaonis).